Here is a 228-residue protein sequence, read N- to C-terminus: Cytidylate kinase (228 aa).

10–18 (GPSGSGKGT) contacts ATP.

The protein belongs to the cytidylate kinase family. Type 1 subfamily.

Its subcellular location is the cytoplasm. The catalysed reaction is CMP + ATP = CDP + ADP. The enzyme catalyses dCMP + ATP = dCDP + ADP. The polypeptide is Cytidylate kinase (Acinetobacter baumannii (strain SDF)).